We begin with the raw amino-acid sequence, 197 residues long: Peptide deformylase (197 aa).

Residues Cys-106 and His-148 each coordinate Fe cation. The active site involves Glu-149. His-152 provides a ligand contact to Fe cation.

This sequence belongs to the polypeptide deformylase family. Fe(2+) serves as cofactor.

It carries out the reaction N-terminal N-formyl-L-methionyl-[peptide] + H2O = N-terminal L-methionyl-[peptide] + formate. Its function is as follows. Removes the formyl group from the N-terminal Met of newly synthesized proteins. Requires at least a dipeptide for an efficient rate of reaction. N-terminal L-methionine is a prerequisite for activity but the enzyme has broad specificity at other positions. The chain is Peptide deformylase from Mycobacterium sp. (strain JLS).